A 411-amino-acid chain; its full sequence is Anaerobic nitric oxide reductase flavorubredoxin homolog (411 aa).

The zinc metallo-hydrolase stretch occupies residues 30–210 (LRGSSYNSYL…PFSRLVTPKI (181 aa)). 10 residues coordinate Fe cation: His-79, Glu-81, Asp-83, His-147, Asp-166, His-227, Cys-360, Cys-363, Cys-393, and Cys-396. The Rubredoxin-like domain maps to 355–406 (GPRMQCSVCQWIYDPAKGEPMQDVAPGTPWSEVPDNFLCPECSLGKDVFDEL).

The protein in the N-terminal section; belongs to the zinc metallo-hydrolase group 3 family. As to quaternary structure, homotetramer. Fe cation is required as a cofactor.

Its subcellular location is the cytoplasm. It participates in nitrogen metabolism; nitric oxide reduction. In terms of biological role, anaerobic nitric oxide reductase; uses NADH to detoxify nitric oxide (NO), protecting several 4Fe-4S NO-sensitive enzymes. Has at least 2 reductase partners, only one of which (NorW, flavorubredoxin reductase) has been identified. NO probably binds to the di-iron center. Also able to function as an aerobic oxygen reductase. The protein is Anaerobic nitric oxide reductase flavorubredoxin homolog of Escherichia coli O157:H7.